The primary structure comprises 689 residues: Transketolase (689 aa).

Residue H56 coordinates substrate. Thiamine diphosphate is bound by residues H96 and 144–146 (GNL). D185 contributes to the Mg(2+) binding site. Residues G186 and N215 each coordinate thiamine diphosphate. The Mg(2+) site is built by N215 and I217. Substrate-binding residues include H289, R380, and S407. H289 is a binding site for thiamine diphosphate. E434 functions as the Proton donor in the catalytic mechanism. F460 contacts thiamine diphosphate. 3 residues coordinate substrate: H484, D492, and R543.

The protein belongs to the transketolase family. In terms of assembly, homodimer. Mg(2+) is required as a cofactor. Requires Ca(2+) as cofactor. Mn(2+) serves as cofactor. It depends on Co(2+) as a cofactor. The cofactor is thiamine diphosphate.

It carries out the reaction D-sedoheptulose 7-phosphate + D-glyceraldehyde 3-phosphate = aldehydo-D-ribose 5-phosphate + D-xylulose 5-phosphate. Catalyzes the transfer of a two-carbon ketol group from a ketose donor to an aldose acceptor, via a covalent intermediate with the cofactor thiamine pyrophosphate. The chain is Transketolase (tkt) from Aquifex aeolicus (strain VF5).